A 131-amino-acid polypeptide reads, in one-letter code: Small ribosomal subunit protein uS11 (131 aa).

It belongs to the universal ribosomal protein uS11 family. Part of the 30S ribosomal subunit. Interacts with proteins S7 and S18. Binds to IF-3.

Located on the platform of the 30S subunit, it bridges several disparate RNA helices of the 16S rRNA. Forms part of the Shine-Dalgarno cleft in the 70S ribosome. The chain is Small ribosomal subunit protein uS11 from Natranaerobius thermophilus (strain ATCC BAA-1301 / DSM 18059 / JW/NM-WN-LF).